Reading from the N-terminus, the 606-residue chain is 4-hydroxy-3-methylbut-2-en-1-yl diphosphate synthase (flavodoxin) (606 aa).

[4Fe-4S] cluster is bound by residues Cys-513, Cys-516, Cys-547, and Glu-554.

The protein belongs to the IspG family. [4Fe-4S] cluster is required as a cofactor.

The enzyme catalyses (2E)-4-hydroxy-3-methylbut-2-enyl diphosphate + oxidized [flavodoxin] + H2O + 2 H(+) = 2-C-methyl-D-erythritol 2,4-cyclic diphosphate + reduced [flavodoxin]. Its pathway is isoprenoid biosynthesis; isopentenyl diphosphate biosynthesis via DXP pathway; isopentenyl diphosphate from 1-deoxy-D-xylulose 5-phosphate: step 5/6. In terms of biological role, converts 2C-methyl-D-erythritol 2,4-cyclodiphosphate (ME-2,4cPP) into 1-hydroxy-2-methyl-2-(E)-butenyl 4-diphosphate. The chain is 4-hydroxy-3-methylbut-2-en-1-yl diphosphate synthase (flavodoxin) from Chlamydia abortus (strain DSM 27085 / S26/3) (Chlamydophila abortus).